The following is a 94-amino-acid chain: ESAT-6-like protein EsxL (94 aa).

Belongs to the WXG100 family. ESAT-6 subfamily. Strongly interacts with EsxK to form a heterodimeric complex under reducing conditions.

Its subcellular location is the secreted. The sequence is that of ESAT-6-like protein EsxL from Mycobacterium bovis (strain ATCC BAA-935 / AF2122/97).